The following is a 200-amino-acid chain: MIGKLSGKIDSQCDDYVIIDVNGVGYLVYASGTTLAKLVEGRFYKLFIETHVREEHIHLYGFLTLEEKNFFNLLQSVNGIGTKMALSILSNLTPTDIKIAINNDDKNIFKAISGVGDKLTERIMLELKGKIAKIFSSSAIIKDSSNISSVEINEVIKALVNLGFTRFEAQNTVQGIITQNTKISIDELIKTALKNRNSSF.

Residues 1–63 (MIGKLSGKID…EEHIHLYGFL (63 aa)) are domain I. The interval 64 to 142 (TLEEKNFFNL…KIFSSSAIIK (79 aa)) is domain II. Positions 142–146 (KDSSN) are flexible linker. The tract at residues 147–200 (ISSVEINEVIKALVNLGFTRFEAQNTVQGIITQNTKISIDELIKTALKNRNSSF) is domain III.

The protein belongs to the RuvA family. In terms of assembly, homotetramer. Forms an RuvA(8)-RuvB(12)-Holliday junction (HJ) complex. HJ DNA is sandwiched between 2 RuvA tetramers; dsDNA enters through RuvA and exits via RuvB. An RuvB hexamer assembles on each DNA strand where it exits the tetramer. Each RuvB hexamer is contacted by two RuvA subunits (via domain III) on 2 adjacent RuvB subunits; this complex drives branch migration. In the full resolvosome a probable DNA-RuvA(4)-RuvB(12)-RuvC(2) complex forms which resolves the HJ.

It localises to the cytoplasm. In terms of biological role, the RuvA-RuvB-RuvC complex processes Holliday junction (HJ) DNA during genetic recombination and DNA repair, while the RuvA-RuvB complex plays an important role in the rescue of blocked DNA replication forks via replication fork reversal (RFR). RuvA specifically binds to HJ cruciform DNA, conferring on it an open structure. The RuvB hexamer acts as an ATP-dependent pump, pulling dsDNA into and through the RuvAB complex. HJ branch migration allows RuvC to scan DNA until it finds its consensus sequence, where it cleaves and resolves the cruciform DNA. The protein is Holliday junction branch migration complex subunit RuvA of Rickettsia typhi (strain ATCC VR-144 / Wilmington).